An 86-amino-acid chain; its full sequence is MAEDMETKLKNYKTAPFDSRFPNQNQTRNCWQNYLDFHRCQKAMTAKGGDISVCEWYQRVYQSLCPTSWVTDWDEQRAEGTFPGKI.

Alanine 2 is modified (N-acetylalanine). Residues 27 to 73 (TRNCWQNYLDFHRCQKAMTAKGGDISVCEWYQRVYQSLCPTSWVTDW) form the CHCH domain. The Cx9C motif signature appears at 30–40 (CWQNYLDFHRC). Disulfide bonds link cysteine 30/cysteine 65 and cysteine 40/cysteine 54. Residues 54 to 65 (CEWYQRVYQSLC) carry the Cx10C motif motif.

The protein belongs to the cytochrome c oxidase subunit 6B family. In terms of assembly, component of the cytochrome c oxidase (complex IV, CIV), a multisubunit enzyme composed of 14 subunits. The complex is composed of a catalytic core of 3 subunits MT-CO1, MT-CO2 and MT-CO3, encoded in the mitochondrial DNA, and 11 supernumerary subunits COX4I, COX5A, COX5B, COX6A, COX6B, COX6C, COX7A, COX7B, COX7C, COX8 and NDUFA4, which are encoded in the nuclear genome. The complex exists as a monomer or a dimer and forms supercomplexes (SCs) in the inner mitochondrial membrane with NADH-ubiquinone oxidoreductase (complex I, CI) and ubiquinol-cytochrome c oxidoreductase (cytochrome b-c1 complex, complex III, CIII), resulting in different assemblies (supercomplex SCI(1)III(2)IV(1) and megacomplex MCI(2)III(2)IV(2)).

The protein resides in the mitochondrion inner membrane. Its pathway is energy metabolism; oxidative phosphorylation. Component of the cytochrome c oxidase, the last enzyme in the mitochondrial electron transport chain which drives oxidative phosphorylation. The respiratory chain contains 3 multisubunit complexes succinate dehydrogenase (complex II, CII), ubiquinol-cytochrome c oxidoreductase (cytochrome b-c1 complex, complex III, CIII) and cytochrome c oxidase (complex IV, CIV), that cooperate to transfer electrons derived from NADH and succinate to molecular oxygen, creating an electrochemical gradient over the inner membrane that drives transmembrane transport and the ATP synthase. Cytochrome c oxidase is the component of the respiratory chain that catalyzes the reduction of oxygen to water. Electrons originating from reduced cytochrome c in the intermembrane space (IMS) are transferred via the dinuclear copper A center (CU(A)) of subunit 2 and heme A of subunit 1 to the active site in subunit 1, a binuclear center (BNC) formed by heme A3 and copper B (CU(B)). The BNC reduces molecular oxygen to 2 water molecules using 4 electrons from cytochrome c in the IMS and 4 protons from the mitochondrial matrix. The polypeptide is Cytochrome c oxidase subunit 6B1 (COX6B1) (Pongo abelii (Sumatran orangutan)).